The primary structure comprises 634 residues: Kelch-like protein 22 (634 aa).

A2 is modified (N-acetylalanine). The BTB domain occupies 50–117; that stretch reads FDVVLVVEGR…IYTSELELSL (68 aa). 6 Kelch repeats span residues 299 to 349, 350 to 399, 400 to 446, 448 to 493, 494 to 544, and 545 to 593; these read CVVG…VLNN, FVYL…VVGR, YIYA…TLEG, MYIT…TLLN, KLYV…VLDN, and RIYV…VLTL. T463 carries the post-translational modification Phosphothreonine. Y466 carries the post-translational modification Phosphotyrosine. Phosphothreonine is present on T475. Residues 600 to 634 form a disordered region; the sequence is EPPRGTPDRSQADPDFASEVMSVSDWEEFDNSSED. T605 carries the post-translational modification Phosphothreonine. Residues 624-634 are compositionally biased toward acidic residues; sequence DWEEFDNSSED.

As to quaternary structure, component of the BCR(KLHL22) E3 ubiquitin ligase complex, at least composed of CUL3, KLHL22 and RBX1. Interacts with PLK1. Interacts with DEPDC5 (via DEP domain); the interaction depends on amino acid availability. Interacts with YWHAE; required for the nuclear localization of KLHL22 upon amino acid starvation.

Its subcellular location is the cytoplasm. It is found in the cytosol. The protein resides in the cytoskeleton. It localises to the microtubule organizing center. The protein localises to the centrosome. Its subcellular location is the spindle. It is found in the nucleus. The protein resides in the lysosome. The protein operates within protein modification; protein ubiquitination. Substrate-specific adapter of a BCR (BTB-CUL3-RBX1) E3 ubiquitin ligase complex required for chromosome alignment and localization of PLK1 at kinetochores. The BCR(KLHL22) ubiquitin ligase complex mediates monoubiquitination of PLK1, leading to PLK1 dissociation from phosphoreceptor proteins and subsequent removal from kinetochores, allowing silencing of the spindle assembly checkpoint (SAC) and chromosome segregation. Monoubiquitination of PLK1 does not lead to PLK1 degradation. The BCR(KLHL22) ubiquitin ligase complex is also responsible for the amino acid-stimulated 'Lys-48' polyubiquitination and proteasomal degradation of DEPDC5. Through the degradation of DEPDC5, releases the GATOR1 complex-mediated inhibition of the TORC1 pathway. It is therefore an amino acid-dependent activator within the amino acid-sensing branch of the TORC1 pathway, indirectly regulating different cellular processes including cell growth and autophagy. The polypeptide is Kelch-like protein 22 (Homo sapiens (Human)).